Reading from the N-terminus, the 264-residue chain is Phosphonoacetaldehyde hydrolase (264 aa).

The active-site Nucleophile is Asp-9. Residues Asp-9 and Ala-11 each contribute to the Mg(2+) site. Lys-50 functions as the Schiff-base intermediate with substrate in the catalytic mechanism. Residue Asp-183 participates in Mg(2+) binding.

This sequence belongs to the HAD-like hydrolase superfamily. PhnX family. As to quaternary structure, homodimer. Requires Mg(2+) as cofactor.

The enzyme catalyses phosphonoacetaldehyde + H2O = acetaldehyde + phosphate + H(+). In terms of biological role, involved in phosphonate degradation. The sequence is that of Phosphonoacetaldehyde hydrolase from Bacillus cereus (strain ATCC 10987 / NRS 248).